The sequence spans 349 residues: Phosphoribosylformylglycinamidine cyclo-ligase (349 aa).

This sequence belongs to the AIR synthase family.

The protein resides in the cytoplasm. The catalysed reaction is 2-formamido-N(1)-(5-O-phospho-beta-D-ribosyl)acetamidine + ATP = 5-amino-1-(5-phospho-beta-D-ribosyl)imidazole + ADP + phosphate + H(+). The protein operates within purine metabolism; IMP biosynthesis via de novo pathway; 5-amino-1-(5-phospho-D-ribosyl)imidazole from N(2)-formyl-N(1)-(5-phospho-D-ribosyl)glycinamide: step 2/2. The protein is Phosphoribosylformylglycinamidine cyclo-ligase of Methanococcus maripaludis (strain C5 / ATCC BAA-1333).